We begin with the raw amino-acid sequence, 110 residues long: Large ribosomal subunit protein uL22 (110 aa).

Belongs to the universal ribosomal protein uL22 family. As to quaternary structure, part of the 50S ribosomal subunit.

Its function is as follows. This protein binds specifically to 23S rRNA; its binding is stimulated by other ribosomal proteins, e.g. L4, L17, and L20. It is important during the early stages of 50S assembly. It makes multiple contacts with different domains of the 23S rRNA in the assembled 50S subunit and ribosome. Functionally, the globular domain of the protein is located near the polypeptide exit tunnel on the outside of the subunit, while an extended beta-hairpin is found that lines the wall of the exit tunnel in the center of the 70S ribosome. In Pseudomonas aeruginosa (strain LESB58), this protein is Large ribosomal subunit protein uL22.